The following is a 375-amino-acid chain: Dual-specificity RNA methyltransferase RlmN (375 aa).

The active-site Proton acceptor is Glu98. Positions 106 to 346 (GGKRRTLCVS…VRTTRGDDID (241 aa)) constitute a Radical SAM core domain. Cys113 and Cys349 form a disulfide bridge. The [4Fe-4S] cluster site is built by Cys120, Cys124, and Cys127. Residues 174-175 (GE), Ser206, 228-230 (SLH), and Asn306 each bind S-adenosyl-L-methionine. Cys349 functions as the S-methylcysteine intermediate in the catalytic mechanism.

This sequence belongs to the radical SAM superfamily. RlmN family. Requires [4Fe-4S] cluster as cofactor.

The protein resides in the cytoplasm. It catalyses the reaction adenosine(2503) in 23S rRNA + 2 reduced [2Fe-2S]-[ferredoxin] + 2 S-adenosyl-L-methionine = 2-methyladenosine(2503) in 23S rRNA + 5'-deoxyadenosine + L-methionine + 2 oxidized [2Fe-2S]-[ferredoxin] + S-adenosyl-L-homocysteine. It carries out the reaction adenosine(37) in tRNA + 2 reduced [2Fe-2S]-[ferredoxin] + 2 S-adenosyl-L-methionine = 2-methyladenosine(37) in tRNA + 5'-deoxyadenosine + L-methionine + 2 oxidized [2Fe-2S]-[ferredoxin] + S-adenosyl-L-homocysteine. Functionally, specifically methylates position 2 of adenine 2503 in 23S rRNA and position 2 of adenine 37 in tRNAs. m2A2503 modification seems to play a crucial role in the proofreading step occurring at the peptidyl transferase center and thus would serve to optimize ribosomal fidelity. The chain is Dual-specificity RNA methyltransferase RlmN from Chromohalobacter salexigens (strain ATCC BAA-138 / DSM 3043 / CIP 106854 / NCIMB 13768 / 1H11).